Consider the following 185-residue polypeptide: Large ribosomal subunit protein uL5 (185 aa).

Belongs to the universal ribosomal protein uL5 family. As to quaternary structure, part of the 50S ribosomal subunit; part of the 5S rRNA/L5/L18/L25 subcomplex. Contacts the 5S rRNA and the P site tRNA. Forms a bridge to the 30S subunit in the 70S ribosome.

Its function is as follows. This is one of the proteins that bind and probably mediate the attachment of the 5S RNA into the large ribosomal subunit, where it forms part of the central protuberance. In the 70S ribosome it contacts protein S13 of the 30S subunit (bridge B1b), connecting the 2 subunits; this bridge is implicated in subunit movement. Contacts the P site tRNA; the 5S rRNA and some of its associated proteins might help stabilize positioning of ribosome-bound tRNAs. This chain is Large ribosomal subunit protein uL5, found in Bartonella henselae (strain ATCC 49882 / DSM 28221 / CCUG 30454 / Houston 1) (Rochalimaea henselae).